The following is a 435-amino-acid chain: GTPase Der (435 aa).

2 EngA-type G domains span residues 4–167 (PVVA…PAEK) and 175–350 (ISFS…DNQN). GTP is bound by residues 10-17 (GQPNVGKS), 57-61 (DTGGI), 119-122 (NKAD), 181-188 (GRPNVGKS), 228-232 (DTAGI), and 293-296 (NKWD). Positions 351-435 (QRIQSSVLND…PIKILPRKRK (85 aa)) constitute a KH-like domain.

The protein belongs to the TRAFAC class TrmE-Era-EngA-EngB-Septin-like GTPase superfamily. EngA (Der) GTPase family. Associates with the 50S ribosomal subunit.

GTPase that plays an essential role in the late steps of ribosome biogenesis. This chain is GTPase Der, found in Lactobacillus helveticus (strain DPC 4571).